An 858-amino-acid polypeptide reads, in one-letter code: Elongation factor 2 (858 aa).

The tr-type G domain occupies 17–362; the sequence is ANIRNMSVIA…MITIHLPSPV (346 aa). GTP is bound at residue 26 to 33; it reads AHVDHGKS. Position 54 is a phosphothreonine (T54). T57 bears the Phosphothreonine; by EEF2K mark. Position 59 is a phosphothreonine (T59). K152 carries the post-translational modification N6-succinyllysine. Residues 158-161 and 216-218 contribute to the GTP site; these read NKMD and SGL. An N6-acetyllysine modification is found at K235. The residue at position 239 (K239) is an N6-acetyllysine; alternate. Residue K239 forms a Glycyl lysine isopeptide (Lys-Gly) (interchain with G-Cter in SUMO1); alternate linkage. A Phosphotyrosine; by CSK modification is found at Y265. K272 bears the N6-acetyllysine; alternate mark. K272 bears the N6-succinyllysine; alternate mark. K275 carries the post-translational modification N6-acetyllysine. K322 is covalently cross-linked (Glycyl lysine isopeptide (Lys-Gly) (interchain with G-Cter in SUMO)). S325 bears the Phosphoserine mark. Position 373 is a phosphotyrosine; by CSK (Y373). T435 is subject to Phosphothreonine. N6-acetyllysine is present on residues K439 and K445. S502 carries the post-translational modification Phosphoserine. K525 bears the N6,N6,N6-trimethyllysine; by EEF2KMT mark. K529 is covalently cross-linked (Glycyl lysine isopeptide (Lys-Gly) (interchain with G-Cter in SUMO)). An N6-succinyllysine modification is found at K572. Phosphoserine; by CDK2 is present on S595. An N6-acetyllysine modification is found at K619. Position 715 is a diphthamide (H715).

Belongs to the TRAFAC class translation factor GTPase superfamily. Classic translation factor GTPase family. EF-G/EF-2 subfamily. In terms of assembly, binds to 80S ribosomes. Actively translating ribosomes show mutually exclusive binding of eIF5a (EIF5A or EIF5A2) and EEF2/eEF2. Interacts with SERBP1; interaction sequesters EEF2/eEF2 at the A-site of the ribosome, thereby blocking the interaction sites of the mRNA-tRNA complex, promoting ribosome stabilization and hibernation. Interacts with HABP4; interaction takes place at the A-site of hibernating ribosomes and promotes ribosome stabilization. Component of the mRNA surveillance SURF complex, at least composed of ERF1, ERF3 (ERF3A or ERF3B), EEF2, UPF1/RENT1, SMG1, SMG8 and SMG9. Interacts with RBPMS2. Phosphorylation by EF-2 kinase completely inactivates EF-2; it requires prior phosphorylation by CDK2 at Ser-595 during mitotic prometaphase. Phosphorylation by CSK promotes SUMOylation, proteolytic cleavage, and nuclear translocation if the C-terminal fragment. Post-translationally, diphthamide is 2-[3-carboxyamido-3-(trimethyl-ammonio)propyl]histidine. In terms of processing, ISGylated. Proteolytically processed at two sites following phosphorylation by CSK. Post-translationally, SUMOylated following phosphorylation by CSK, promotes proteolytic cleavage.

It localises to the cytoplasm. The protein resides in the nucleus. The enzyme catalyses GTP + H2O = GDP + phosphate + H(+). Its function is as follows. Catalyzes the GTP-dependent ribosomal translocation step during translation elongation. During this step, the ribosome changes from the pre-translocational (PRE) to the post-translocational (POST) state as the newly formed A-site-bound peptidyl-tRNA and P-site-bound deacylated tRNA move to the P and E sites, respectively. Catalyzes the coordinated movement of the two tRNA molecules, the mRNA and conformational changes in the ribosome. The sequence is that of Elongation factor 2 (EEF2) from Pongo abelii (Sumatran orangutan).